Consider the following 290-residue polypeptide: Enoyl-CoA hydratase, mitochondrial (290 aa).

The N-terminal 27 residues, 1 to 27 (MAALRVLLSCVRGPLRPPVRCPAWRPF), are a transit peptide targeting the mitochondrion. Thr-46 carries the phosphothreonine modification. 98 to 101 (ADIK) is a substrate binding site. Position 101 is an N6-acetyllysine; alternate (Lys-101). Lys-101 is subject to N6-succinyllysine; alternate. Phosphoserine is present on Ser-114. At Lys-115 the chain carries N6-acetyllysine; alternate. Lys-115 is modified (N6-succinyllysine; alternate). At Lys-118 the chain carries N6-acetyllysine. Gly-141 contributes to the substrate binding site. Lys-204 carries the N6-succinyllysine modification. Position 211 is an N6-acetyllysine (Lys-211).

It belongs to the enoyl-CoA hydratase/isomerase family. As to quaternary structure, homohexamer; dimer of trimers. In terms of tissue distribution, liver, fibroblast, muscle. Barely detectable in spleen and kidney.

The protein resides in the mitochondrion matrix. It catalyses the reaction a (3S)-3-hydroxyacyl-CoA = a (2E)-enoyl-CoA + H2O. It carries out the reaction a (3E)-enoyl-CoA = a 4-saturated (2E)-enoyl-CoA. The enzyme catalyses (3E)-hexenoyl-CoA = (2E)-hexenoyl-CoA. The catalysed reaction is (3S)-3-hydroxybutanoyl-CoA = (2E)-butenoyl-CoA + H2O. It catalyses the reaction 3-hydroxyisovaleryl-CoA = 3-methylbut-2-enoyl-CoA + H2O. It carries out the reaction 3-hydroxypropanoyl-CoA = acryloyl-CoA + H2O. The enzyme catalyses 3-hydroxybutanoyl-CoA = (2E)-butenoyl-CoA + H2O. The catalysed reaction is 2-methylpropenoyl-CoA + H2O = (S)-3-hydroxyisobutanoyl-CoA. It catalyses the reaction (3S)-hydroxyhexanoyl-CoA = (2E)-hexenoyl-CoA + H2O. It carries out the reaction (3S)-hydroxydecanoyl-CoA = (2E)-decenoyl-CoA + H2O. It participates in lipid metabolism; fatty acid beta-oxidation. Converts unsaturated trans-2-enoyl-CoA species ((2E)-enoyl-CoA) to the corresponding (3S)-3hydroxyacyl-CoA species through addition of a water molecule to the double bond. Catalyzes the hydration of medium- and short-chained fatty enoyl-CoA thioesters from 4 carbons long (C4) up to C16. Has high substrate specificity for crotonyl-CoA ((2E)-butenoyl-CoA) and moderate specificity for acryloyl-CoA, 3-methylcrotonyl-CoA (3-methyl-(2E)-butenoyl-CoA) and methacrylyl-CoA ((2E)-2-methylpropenoyl-CoA). Can bind tiglyl-CoA (2-methylcrotonoyl-CoA), but hydrates only a small amount of this substrate. Plays a key role in the beta-oxidation spiral of short- and medium-chain fatty acid oxidation. At a lower rate than the hydratase reaction, catalyzes the isomerase reaction of trans-3-enoyl-CoA species (such as (3E)-hexenoyl-CoA) to trans-2-enoyl-CoA species (such as (2E)-hexenoyl-CoA), which are subsequently hydrated to 3(S)-3-hydroxyacyl-CoA species (such as (3S)-hydroxyhexanoyl-CoA). The chain is Enoyl-CoA hydratase, mitochondrial from Homo sapiens (Human).